Consider the following 264-residue polypeptide: uncharacterized protein (264 aa).

The first 22 residues, 1–22 (MIHSKKLTLGICLVLLIILIGG), serve as a signal peptide directing secretion. Cysteine 23 carries N-palmitoyl cysteine lipidation. A lipid anchor (S-diacylglycerol cysteine) is attached at cysteine 23.

The protein belongs to the staphylococcal tandem lipoprotein family.

It is found in the cell membrane. This is an uncharacterized protein from Staphylococcus aureus (strain N315).